A 983-amino-acid chain; its full sequence is MKNLFNFFKTSSELRLAYRLLKQINQKRSFYGAMTDFDLANQTNIFKKRLANGEKLKDIRVDAFAVAREATKRILGKTPYDVQILGGLILDMGSVAEMKTGEGKTIASIPPVYLNALLGQGVIVSTVNEYLAERDAEDNGKVYNFLGLTVGINKTEMDANTKRMMYNADITYSVHSELGFDYLRDNMVFSAAEKVQRGLNFCLIDEVDSILIDEAKTPLIISGGKTNLPAQYLSANQFVNTLIAEDFYIDEETKGIKLNDKGIDKANAFFGLRNLYEIQNSEIVHRIQNALRANKVMKRDVEYIVQDGKIALVDQFTGRIMAGRSYSEGLQQALQAKEGLEIEPETKTLATITYQNFFRLFKKLSGMTGTAKTEEQEFIDVYNMRVNVIPTNKPMIRKDERDEIFATSHEKNQAIISEVERVHKRGQPILIGTSQVVDSETLSEMLNQKGLYHTVLNAKQNQLEAEIIAKAGRKNAITIATNMAGRGTDIILEPGVTELGGLYILGTDKAEARRIDNQLRGRSGRQGDVGISRFFISLQDQLFRRFTNFDQIFGAYGQTNGAIKGKYIHAVLLAAQKKIEGFNFDMRKTVLSYDDVIRQQRDLIYAQRDILLQIENFDHYIQKMIIRAVDIILNYDFIILPNQEIHYKNLINFLNDNLSRITHFNFGQIGIENYPIEQLNEFLIKQLETIYFKQIQSVLKENLGKTYFESERYIILSTLDSQWQNHIDTIDKLRSSANLVQYSQKNPYQIFTEEATKKFNILVAESAYQAIVSLFNNSNAEKIEYIKAILSDGTAISYPADSPQEIIDQIIASNEERIAAARKAKEEKQPEFIEKQLAKLKIEKVESGEEFELWKIGDSKLVNLKKEMPLDEKQNILVKMQQEQLEMMSEEEKNLIQEQNLEIVEIEEIEEEIQNENPQKVEFVDFKNDPDAYNKLIFGADYADKQLISSEEEDNNEKTNINNNEDLERTKGEAQQTAKNPNE.

ATP is bound by residues Q83, 101 to 105 (GEGKT), and D489. The segment at 948–983 (ISSEEEDNNEKTNINNNEDLERTKGEAQQTAKNPNE) is disordered. A compositionally biased stretch (polar residues) spans 973–983 (EAQQTAKNPNE).

This sequence belongs to the SecA family. Monomer and homodimer. Part of the essential Sec protein translocation apparatus which comprises SecA, SecYEG and auxiliary proteins SecDF. Other proteins may also be involved.

It localises to the cell membrane. The protein resides in the cytoplasm. The catalysed reaction is ATP + H2O + cellular proteinSide 1 = ADP + phosphate + cellular proteinSide 2.. In terms of biological role, part of the Sec protein translocase complex. Interacts with the SecYEG preprotein conducting channel. Has a central role in coupling the hydrolysis of ATP to the transfer of proteins into and across the cell membrane, serving as an ATP-driven molecular motor driving the stepwise translocation of polypeptide chains across the membrane. In Mesomycoplasma hyopneumoniae (strain 232) (Mycoplasma hyopneumoniae), this protein is Protein translocase subunit SecA.